Consider the following 130-residue polypeptide: Small ribosomal subunit protein uS11 (130 aa).

Belongs to the universal ribosomal protein uS11 family. As to quaternary structure, part of the 30S ribosomal subunit. Interacts with proteins S7 and S18. Binds to IF-3.

Its function is as follows. Located on the platform of the 30S subunit, it bridges several disparate RNA helices of the 16S rRNA. Forms part of the Shine-Dalgarno cleft in the 70S ribosome. This is Small ribosomal subunit protein uS11 from Parasynechococcus marenigrum (strain WH8102).